Here is a 227-residue protein sequence, read N- to C-terminus: GTPase ERas (227 aa).

The segment covering 1-19 has biased composition (polar residues); the sequence is MALPTKSSILDLSSGTPCT. The interval 1-25 is disordered; sequence MALPTKSSILDLSSGTPCTRSPEES. Residue 48 to 55 coordinates GTP; it reads GASGVGKS. The short motif at 70–78 is the Effector region element; sequence HDPTIQDSY. GTP contacts are provided by residues 95–99 and 151–154; these read DTSGQ and NKCD. 2 S-palmitoyl cysteine lipidation sites follow: Cys220 and Cys222. Cys224 carries the cysteine methyl ester modification. Residue Cys224 is the site of S-farnesyl cysteine attachment. A propeptide spans 225–227 (removed in mature form); it reads SVA.

This sequence belongs to the small GTPase superfamily. Ras family. As to quaternary structure, interacts with PIK3CD. As to expression, expressed in several undifferentiated mouse embryonic stem cell lines.

Its subcellular location is the cell membrane. It catalyses the reaction GTP + H2O = GDP + phosphate + H(+). Alternates between an inactive form bound to GDP and an active form bound to GTP. Activated by a guanine nucleotide-exchange factor (GEF) and inactivated by a GTPase-activating protein (GAP). In terms of biological role, ras proteins bind GDP/GTP and possess intrinsic GTPase activity. Plays an important role in the tumor-like growth properties of embryonic stem cells. This chain is GTPase ERas (Eras), found in Mus musculus (Mouse).